We begin with the raw amino-acid sequence, 1935 residues long: Myosin heavy chain, fast skeletal muscle (1935 aa).

A Myosin N-terminal SH3-like domain is found at 32–81; that stretch reads DAKTAFFVVDPDEMYLKGTLVSKEGGKATVKTHSGKTVTVKEDEIFPMNP. In terms of domain architecture, Myosin motor spans 85–779; that stretch reads DKIEDMAMMT…LLGALEEMRD (695 aa). Lys129 bears the N6,N6,N6-trimethyllysine mark. 178–185 provides a ligand contact to ATP; it reads GESGAGKT. Actin-binding regions lie at residues 659-681 and 761-775; these read LMTN…ESKT and HTKV…GALE. The IQ domain occupies 782-811; that stretch reads LALLVTMTQALCRGYVMRKEFVKMMERRES. A hinge region spans residues 812–839; that stretch reads IYSIQYNIRSFMNVKHWPWMKLYFKIKP. Residues 840–1935 adopt a coiled-coil conformation; that stretch reads LLKSAETEKE…RDAGKSKDEE (1096 aa). Disordered stretches follow at residues 1589–1608 and 1902–1935; these read RNSQ…EVRS and HELE…KDEE. Positions 1592-1603 are enriched in polar residues; the sequence is QRVIDSMQSTLD. Basic and acidic residues-rich tracts occupy residues 1902–1913 and 1924–1935; these read HELEEAQERADV and KSRDAGKSKDEE.

It belongs to the TRAFAC class myosin-kinesin ATPase superfamily. Myosin family. Muscle myosin is a hexameric protein that consists of 2 heavy chain subunits (MHC), 2 alkali light chain subunits (MLC) and 2 regulatory light chain subunits (MLC-2).

The protein resides in the cytoplasm. The protein localises to the myofibril. Functionally, muscle contraction. This Cyprinus carpio (Common carp) protein is Myosin heavy chain, fast skeletal muscle.